The primary structure comprises 349 residues: tRNA N6-adenosine threonylcarbamoyltransferase (349 aa).

Fe cation contacts are provided by histidine 114 and histidine 118. Substrate-binding positions include 136–140, aspartate 169, glycine 182, and asparagine 280; that span reads IMSGG. Position 308 (aspartate 308) interacts with Fe cation.

Belongs to the KAE1 / TsaD family. Requires Fe(2+) as cofactor.

The protein resides in the cytoplasm. It catalyses the reaction L-threonylcarbamoyladenylate + adenosine(37) in tRNA = N(6)-L-threonylcarbamoyladenosine(37) in tRNA + AMP + H(+). Functionally, required for the formation of a threonylcarbamoyl group on adenosine at position 37 (t(6)A37) in tRNAs that read codons beginning with adenine. Is involved in the transfer of the threonylcarbamoyl moiety of threonylcarbamoyl-AMP (TC-AMP) to the N6 group of A37, together with TsaE and TsaB. TsaD likely plays a direct catalytic role in this reaction. The chain is tRNA N6-adenosine threonylcarbamoyltransferase from Ehrlichia chaffeensis (strain ATCC CRL-10679 / Arkansas).